Here is a 250-residue protein sequence, read N- to C-terminus: Triosephosphate isomerase (250 aa).

9–11 contacts substrate; it reads NWK. His-95 acts as the Electrophile in catalysis. Glu-167 functions as the Proton acceptor in the catalytic mechanism. Substrate contacts are provided by residues Gly-173, Ser-213, and 234 to 235; that span reads GG.

Belongs to the triosephosphate isomerase family. As to quaternary structure, homodimer.

It localises to the cytoplasm. The catalysed reaction is D-glyceraldehyde 3-phosphate = dihydroxyacetone phosphate. The protein operates within carbohydrate biosynthesis; gluconeogenesis. It functions in the pathway carbohydrate degradation; glycolysis; D-glyceraldehyde 3-phosphate from glycerone phosphate: step 1/1. Its function is as follows. Involved in the gluconeogenesis. Catalyzes stereospecifically the conversion of dihydroxyacetone phosphate (DHAP) to D-glyceraldehyde-3-phosphate (G3P). The sequence is that of Triosephosphate isomerase from Flavobacterium johnsoniae (strain ATCC 17061 / DSM 2064 / JCM 8514 / BCRC 14874 / CCUG 350202 / NBRC 14942 / NCIMB 11054 / UW101) (Cytophaga johnsonae).